We begin with the raw amino-acid sequence, 357 residues long: Cytochrome c peroxidase, mitochondrial (357 aa).

A mitochondrion-targeting transit peptide spans 1–23; that stretch reads MSATALRIAPIASRTFQRRLGYL. His-116 (proton acceptor) is an active-site residue. Positions 189-212 are disordered; the sequence is PWRSGRTDLPEDMTPDNGRLPDGD. His-239 contacts heme b. Trp-255 functions as the Tryptophan radical intermediate in the catalytic mechanism.

This sequence belongs to the peroxidase family. Cytochrome c peroxidase subfamily. As to quaternary structure, forms a one-to-one complex with cytochrome c. Heme b is required as a cofactor.

The protein resides in the mitochondrion matrix. Its subcellular location is the mitochondrion intermembrane space. The enzyme catalyses 2 Fe(II)-[cytochrome c] + H2O2 + 2 H(+) = 2 Fe(III)-[cytochrome c] + 2 H2O. Functionally, destroys radicals which are normally produced within the cells and which are toxic to biological systems. This chain is Cytochrome c peroxidase, mitochondrial, found in Candida glabrata (strain ATCC 2001 / BCRC 20586 / JCM 3761 / NBRC 0622 / NRRL Y-65 / CBS 138) (Yeast).